Here is a 216-residue protein sequence, read N- to C-terminus: ATP-dependent Clp protease proteolytic subunit (216 aa).

Serine 101 serves as the catalytic Nucleophile. Histidine 126 is a catalytic residue.

This sequence belongs to the peptidase S14 family. As to quaternary structure, component of the chloroplastic Clp protease core complex.

It localises to the plastid. Its subcellular location is the chloroplast stroma. The enzyme catalyses Hydrolysis of proteins to small peptides in the presence of ATP and magnesium. alpha-casein is the usual test substrate. In the absence of ATP, only oligopeptides shorter than five residues are hydrolyzed (such as succinyl-Leu-Tyr-|-NHMec, and Leu-Tyr-Leu-|-Tyr-Trp, in which cleavage of the -Tyr-|-Leu- and -Tyr-|-Trp bonds also occurs).. Cleaves peptides in various proteins in a process that requires ATP hydrolysis. Has a chymotrypsin-like activity. Plays a major role in the degradation of misfolded proteins. This is ATP-dependent Clp protease proteolytic subunit from Triticum aestivum (Wheat).